The following is a 123-amino-acid chain: Succinate dehydrogenase assembly factor 3, mitochondrial (123 aa).

The transit peptide at 1-31 (MANPAHISAVRTLYKKILVLHRFLPIDLRAL) directs the protein to the mitochondrion.

It belongs to the complex I LYR family. SDHAF3 subfamily. As to quaternary structure, interacts with sdhb within an sdha-sdhb subcomplex.

It localises to the mitochondrion matrix. Functionally, plays an essential role in the assembly of succinate dehydrogenase (SDH), an enzyme complex (also referred to as respiratory complex II) that is a component of both the tricarboxylic acid (TCA) cycle and the mitochondrial electron transport chain, and which couples the oxidation of succinate to fumarate with the reduction of ubiquinone (coenzyme Q) to ubiquinol. Promotes maturation of the iron-sulfur protein subunit sdhb of the SDH catalytic dimer, protecting it from the deleterious effects of oxidants. May act together with SDHAF1. The sequence is that of Succinate dehydrogenase assembly factor 3, mitochondrial from Danio rerio (Zebrafish).